Reading from the N-terminus, the 563-residue chain is Arginine--tRNA ligase (563 aa).

A 'HIGH' region motif is present at residues 121 to 131 (PNIAKPFSIGH).

Belongs to the class-I aminoacyl-tRNA synthetase family. Monomer.

It is found in the cytoplasm. It carries out the reaction tRNA(Arg) + L-arginine + ATP = L-arginyl-tRNA(Arg) + AMP + diphosphate. In Streptococcus thermophilus (strain ATCC BAA-250 / LMG 18311), this protein is Arginine--tRNA ligase.